We begin with the raw amino-acid sequence, 284 residues long: 4-hydroxybenzoate octaprenyltransferase (284 aa).

Transmembrane regions (helical) follow at residues 16 to 36, 40 to 60, 91 to 111, 132 to 152, 157 to 177, 206 to 226, 231 to 251, and 259 to 279; these read PIGI…ASDG, WTLL…GCAI, LLVA…LNTL, FFAI…PMGF, NTVP…AVAY, VAAV…VGWQ, TWFA…YTLI, and CFAA…GVVL.

This sequence belongs to the UbiA prenyltransferase family. Requires Mg(2+) as cofactor.

The protein resides in the cell inner membrane. It carries out the reaction all-trans-octaprenyl diphosphate + 4-hydroxybenzoate = 4-hydroxy-3-(all-trans-octaprenyl)benzoate + diphosphate. It functions in the pathway cofactor biosynthesis; ubiquinone biosynthesis. Catalyzes the prenylation of para-hydroxybenzoate (PHB) with an all-trans polyprenyl group. Mediates the second step in the final reaction sequence of ubiquinone-8 (UQ-8) biosynthesis, which is the condensation of the polyisoprenoid side chain with PHB, generating the first membrane-bound Q intermediate 3-octaprenyl-4-hydroxybenzoate. The polypeptide is 4-hydroxybenzoate octaprenyltransferase (Herminiimonas arsenicoxydans).